We begin with the raw amino-acid sequence, 121 residues long: Protein MGF 110-5L (121 aa).

Residues 1 to 20 form the signal peptide; it reads MLVIFLGILGLLANQVSSQL. Asn62 and Asn116 each carry an N-linked (GlcNAc...) asparagine; by host glycan.

It belongs to the asfivirus MGF 110 family.

The sequence is that of Protein MGF 110-5L from African swine fever virus (isolate Portugal/Lis 57/1957) (ASFV).